The following is a 568-amino-acid chain: Proline--tRNA ligase (568 aa).

Belongs to the class-II aminoacyl-tRNA synthetase family. ProS type 1 subfamily. As to quaternary structure, homodimer.

The protein localises to the cytoplasm. The enzyme catalyses tRNA(Pro) + L-proline + ATP = L-prolyl-tRNA(Pro) + AMP + diphosphate. In terms of biological role, catalyzes the attachment of proline to tRNA(Pro) in a two-step reaction: proline is first activated by ATP to form Pro-AMP and then transferred to the acceptor end of tRNA(Pro). As ProRS can inadvertently accommodate and process non-cognate amino acids such as alanine and cysteine, to avoid such errors it has two additional distinct editing activities against alanine. One activity is designated as 'pretransfer' editing and involves the tRNA(Pro)-independent hydrolysis of activated Ala-AMP. The other activity is designated 'posttransfer' editing and involves deacylation of mischarged Ala-tRNA(Pro). The misacylated Cys-tRNA(Pro) is not edited by ProRS. This is Proline--tRNA ligase from Halorhodospira halophila (strain DSM 244 / SL1) (Ectothiorhodospira halophila (strain DSM 244 / SL1)).